The sequence spans 513 residues: Protein disulfide-isomerase 2 (513 aa).

An N-terminal signal peptide occupies residues 1 to 20; the sequence is MNKFLALLFVLALFANIAFS. Thioredoxin domains follow at residues 21 to 147 and 355 to 486; these read CEGH…EELK and DVIG…DNAA. Active-site nucleophile residues include Cys-70, Cys-73, Cys-406, and Cys-409. Cystine bridges form between Cys-70-Cys-73 and Cys-406-Cys-409. The tract at residues 491-513 is disordered; sequence LPSSQTDDNVESKKDSSAKHDEL. Over residues 500–513 the composition is skewed to basic and acidic residues; sequence VESKKDSSAKHDEL. The short motif at 510–513 is the Prevents secretion from ER element; sequence HDEL.

The protein belongs to the protein disulfide isomerase family.

It is found in the endoplasmic reticulum lumen. It catalyses the reaction Catalyzes the rearrangement of -S-S- bonds in proteins.. Functionally, participates in the folding of proteins containing disulfide bonds, may be involved in glycosylation, prolyl hydroxylation and triglyceride transfer. The chain is Protein disulfide-isomerase 2 (pdi2) from Dictyostelium discoideum (Social amoeba).